Consider the following 208-residue polypeptide: Thymidylate kinase (208 aa).

ATP is bound at residue 10–17 (GPEGSGKT).

Belongs to the thymidylate kinase family.

It catalyses the reaction dTMP + ATP = dTDP + ADP. Its function is as follows. Phosphorylation of dTMP to form dTDP in both de novo and salvage pathways of dTTP synthesis. This chain is Thymidylate kinase, found in Bacillus cereus (strain Q1).